Consider the following 380-residue polypeptide: Cytochrome b (380 aa).

The next 4 membrane-spanning stretches (helical) occupy residues 34 to 54, 78 to 99, 114 to 134, and 179 to 199; these read FGSLLGICLTMQILTGLLLAT, WLIRNLHANGASFFFICIYLHI, WNTGVILLLTLMATAFVGYVL, and FFALHFLLPFAIAGLTLIHLT. Heme b contacts are provided by histidine 84 and histidine 98. Positions 183 and 197 each coordinate heme b. Histidine 202 provides a ligand contact to a ubiquinone. The next 4 membrane-spanning stretches (helical) occupy residues 227 to 247, 289 to 309, 321 to 341, and 348 to 368; these read LKDILGLTLLLLPLTTLALFS, LGGVLALAASVLILFLCPLLH, LSQLLFWTLTANLLILTWVGS, and FIIIGQLASLTYFFTLLILFP.

Belongs to the cytochrome b family. In terms of assembly, the cytochrome bc1 complex contains 11 subunits: 3 respiratory subunits (MT-CYB, CYC1 and UQCRFS1), 2 core proteins (UQCRC1 and UQCRC2) and 6 low-molecular weight proteins (UQCRH/QCR6, UQCRB/QCR7, UQCRQ/QCR8, UQCR10/QCR9, UQCR11/QCR10 and a cleavage product of UQCRFS1). This cytochrome bc1 complex then forms a dimer. Requires heme b as cofactor.

It localises to the mitochondrion inner membrane. In terms of biological role, component of the ubiquinol-cytochrome c reductase complex (complex III or cytochrome b-c1 complex) that is part of the mitochondrial respiratory chain. The b-c1 complex mediates electron transfer from ubiquinol to cytochrome c. Contributes to the generation of a proton gradient across the mitochondrial membrane that is then used for ATP synthesis. This is Cytochrome b (MT-CYB) from Ciconia ciconia (White stork).